The following is a 385-amino-acid chain: Cell division protein FtsZ (385 aa).

Residues 20-24 (GGGGN), 107-109 (GTG), E138, R142, and N186 each bind GTP.

It belongs to the FtsZ family. As to quaternary structure, homodimer. Polymerizes to form a dynamic ring structure in a strictly GTP-dependent manner. Interacts directly with several other division proteins.

The protein resides in the cytoplasm. Essential cell division protein that forms a contractile ring structure (Z ring) at the future cell division site. The regulation of the ring assembly controls the timing and the location of cell division. One of the functions of the FtsZ ring is to recruit other cell division proteins to the septum to produce a new cell wall between the dividing cells. Binds GTP and shows GTPase activity. The polypeptide is Cell division protein FtsZ (Buchnera aphidicola subsp. Baizongia pistaciae (strain Bp)).